The primary structure comprises 150 residues: Putative pre-16S rRNA nuclease (150 aa).

The protein belongs to the YqgF nuclease family.

The protein resides in the cytoplasm. In terms of biological role, could be a nuclease involved in processing of the 5'-end of pre-16S rRNA. This is Putative pre-16S rRNA nuclease from Chlamydia felis (strain Fe/C-56) (Chlamydophila felis).